The chain runs to 468 residues: Ubiquitin carboxyl-terminal hydrolase 6 (468 aa).

Residues 1 to 71 (MMIPIAIRWQ…IKPNATLLMM (71 aa)) enclose the Ubiquitin-like domain. The USP domain maps to 101-465 (SGLINLGNTC…SAYILLYKAK (365 aa)). Residue Cys-110 is the Nucleophile of the active site. His-415 functions as the Proton acceptor in the catalytic mechanism.

Belongs to the peptidase C19 family. USP14/UBP6 subfamily. Component of the 26S proteasome. Interacts with rpn1.

The protein localises to the nucleus. The catalysed reaction is Thiol-dependent hydrolysis of ester, thioester, amide, peptide and isopeptide bonds formed by the C-terminal Gly of ubiquitin (a 76-residue protein attached to proteins as an intracellular targeting signal).. Its function is as follows. Ubiquitin-protein hydrolase is involved both in the processing of ubiquitin precursors and of ubiquitinated proteins. This enzyme is a thiol protease that recognizes and hydrolyzes a peptide bond at the C-terminal glycine of ubiquitin. The chain is Ubiquitin carboxyl-terminal hydrolase 6 (ubp6) from Schizosaccharomyces pombe (strain 972 / ATCC 24843) (Fission yeast).